Here is a 638-residue protein sequence, read N- to C-terminus: Acetolactate synthase 2, chloroplastic (638 aa).

Residues 1 to 39 (MATAATAAAALTGATTATPKSRRRAHHLATRRALAAPIR) constitute a chloroplast transit peptide. Positions 44–67 (SRATPTAPPATPLRPWGPNEPRKG) are disordered. Glutamate 112 contacts thiamine diphosphate. A disulfide bridge connects residues cysteine 132 and cysteine 278. FAD is bound by residues arginine 214, 320–341 (HGTV…FGVR), and 363–382 (DIDP…ICAD). Residues 455–535 (QHQMWAAQYY…VKVFVLNNQH (81 aa)) are thiamine pyrophosphate binding. 2 residues coordinate Mg(2+): aspartate 506 and asparagine 533.

This sequence belongs to the TPP enzyme family. The cofactor is Mg(2+). It depends on thiamine diphosphate as a cofactor.

It localises to the plastid. It is found in the chloroplast. It catalyses the reaction 2 pyruvate + H(+) = (2S)-2-acetolactate + CO2. It participates in amino-acid biosynthesis; L-isoleucine biosynthesis; L-isoleucine from 2-oxobutanoate: step 1/4. Its pathway is amino-acid biosynthesis; L-valine biosynthesis; L-valine from pyruvate: step 1/4. In Zea mays (Maize), this protein is Acetolactate synthase 2, chloroplastic (ALS2).